An 892-amino-acid chain; its full sequence is Protein translocase subunit SecA (892 aa).

Residues Q89, 107 to 111 (GEGKT), and D517 each bind ATP. C879, C881, C890, and H891 together coordinate Zn(2+).

The protein belongs to the SecA family. In terms of assembly, monomer and homodimer. Part of the essential Sec protein translocation apparatus which comprises SecA, SecYEG and auxiliary proteins SecDF-YajC and YidC. Requires Zn(2+) as cofactor.

It is found in the cell inner membrane. It localises to the cytoplasm. It catalyses the reaction ATP + H2O + cellular proteinSide 1 = ADP + phosphate + cellular proteinSide 2.. Functionally, part of the Sec protein translocase complex. Interacts with the SecYEG preprotein conducting channel. Has a central role in coupling the hydrolysis of ATP to the transfer of proteins into and across the cell membrane, serving as an ATP-driven molecular motor driving the stepwise translocation of polypeptide chains across the membrane. The polypeptide is Protein translocase subunit SecA (Ruthia magnifica subsp. Calyptogena magnifica).